A 311-amino-acid chain; its full sequence is Olfactory receptor 8G1 (311 aa).

The Extracellular portion of the chain corresponds to 1 to 25 (MSGENNSSVTEFILAGLSEQPELQL). N-linked (GlcNAc...) asparagine glycosylation is found at Asn5 and Asn6. A helical transmembrane segment spans residues 26-46 (PLFLLFLGIYVVTVVGNLGMT). Residues 47–54 (TLIWLSSH) are Cytoplasmic-facing. Residues 55 to 75 (LHTPMYYFLSSLSFIDFCHST) form a helical membrane-spanning segment. The Extracellular segment spans residues 76-99 (VITPKMLVNFVTEKNIISYPECMT). A disulfide bridge connects residues Cys97 and Cys189. A helical membrane pass occupies residues 100-120 (QLYFFLVFAIAECHMLAAMAY). At 121-139 (DRYMAICSPLLYSVIISNK) the chain is on the cytoplasmic side. The chain crosses the membrane as a helical span at residues 140-160 (ACFSLILGVYIIGLVCASVHT). At 161–197 (GCMFRVQFCKFDLINHYFCDLLPLLKLSCSSIYVNKL) the chain is on the extracellular side. The chain crosses the membrane as a helical span at residues 198-217 (LILCVGAFNILVPSLTILCS). Residues 218–237 (YIFIIASILHIRSTEGRSKA) are Cytoplasmic-facing. A helical transmembrane segment spans residues 238–258 (FSTCSSHMLAVVIFFGSAAFM). Topologically, residues 259–271 (YLQPSSISSMDQG) are extracellular. A helical membrane pass occupies residues 272-292 (KVSSVFYTIIVPMLNPLIYSL). Over 293-311 (RNKDVHVSLKKMLQRRTLL) the chain is Cytoplasmic.

This sequence belongs to the G-protein coupled receptor 1 family.

The protein localises to the cell membrane. In terms of biological role, odorant receptor. In Homo sapiens (Human), this protein is Olfactory receptor 8G1 (OR8G1).